The following is a 393-amino-acid chain: Major outer membrane porin, serovar L1 (393 aa).

The first 22 residues, 1–22 (MKKLLKSVLVFAALSSASSLQA), serve as a signal peptide directing secretion.

It belongs to the chlamydial porin (CP) (TC 1.B.2) family. Part of a disulfide cross-linked outer membrane complex (COMC) composed of the major outer membrane porin (MOMP), the small cysteine-rich protein (OmcA) and the large cysteine-rich periplasmic protein (OmcB).

It is found in the cell outer membrane. In terms of biological role, in elementary bodies (EBs, the infectious stage, which is able to survive outside the host cell) provides the structural integrity of the outer envelope through disulfide cross-links with the small cysteine-rich protein and the large cysteine-rich periplasmic protein. It has been described in publications as the Sarkosyl-insoluble COMC (Chlamydia outer membrane complex), and serves as the functional equivalent of peptidoglycan. Functionally, permits diffusion of specific solutes through the outer membrane. The protein is Major outer membrane porin, serovar L1 (ompA) of Chlamydia trachomatis.